A 485-amino-acid polypeptide reads, in one-letter code: Benzaldehyde dehydrogenase YfmT (485 aa).

231-236 (GSTKVG) provides a ligand contact to NAD(+). Catalysis depends on residues glutamate 253 and cysteine 287.

Belongs to the aldehyde dehydrogenase family.

The catalysed reaction is benzaldehyde + NAD(+) + H2O = benzoate + NADH + 2 H(+). It catalyses the reaction vanillin + NAD(+) + H2O = vanillate + NADH + 2 H(+). Its function is as follows. A benzaldehyde dehydrogenase able to act on substrates with 3- and 4-hydroxy and methoxy substitutions; converts vanillin (4-hydroxy-3-methoxybenzaldehyde) to vanillic acid in vitro. The physiological substrate is unknown. The sequence is that of Benzaldehyde dehydrogenase YfmT (yfmT) from Bacillus subtilis (strain 168).